A 245-amino-acid chain; its full sequence is Octanoyltransferase (245 aa).

Positions 54–238 constitute a BPL/LPL catalytic domain; the sequence is GEATELVWLL…AFENIFGETR (185 aa). Residues 92–99, 167–169, and 180–182 contribute to the substrate site; these read RGGQLTYH, AIG, and GIA. The active-site Acyl-thioester intermediate is the Cys198.

It belongs to the LipB family.

The protein localises to the cytoplasm. The enzyme catalyses octanoyl-[ACP] + L-lysyl-[protein] = N(6)-octanoyl-L-lysyl-[protein] + holo-[ACP] + H(+). It participates in protein modification; protein lipoylation via endogenous pathway; protein N(6)-(lipoyl)lysine from octanoyl-[acyl-carrier-protein]: step 1/2. Functionally, catalyzes the transfer of endogenously produced octanoic acid from octanoyl-acyl-carrier-protein onto the lipoyl domains of lipoate-dependent enzymes. Lipoyl-ACP can also act as a substrate although octanoyl-ACP is likely to be the physiological substrate. This chain is Octanoyltransferase, found in Rhodopseudomonas palustris (strain TIE-1).